The primary structure comprises 445 residues: Tubulin beta-3 chain (445 aa).

The MREI motif signature appears at 1-4 (MREI). 8 residues coordinate GTP: Gln-11, Glu-69, Ser-138, Gly-142, Thr-143, Gly-144, Asn-204, and Asn-226. Glu-69 provides a ligand contact to Mg(2+). The interval 425–445 (YQDATAEEEGEFEEEAEEEAE) is disordered. Over residues 429–445 (TAEEEGEFEEEAEEEAE) the composition is skewed to acidic residues. At Glu-438 the chain carries 5-glutamyl polyglutamate.

The protein belongs to the tubulin family. As to quaternary structure, dimer of alpha and beta chains. A typical microtubule is a hollow water-filled tube with an outer diameter of 25 nm and an inner diameter of 15 nM. Alpha-beta heterodimers associate head-to-tail to form protofilaments running lengthwise along the microtubule wall with the beta-tubulin subunit facing the microtubule plus end conferring a structural polarity. Microtubules usually have 13 protofilaments but different protofilament numbers can be found in some organisms and specialized cells. Mg(2+) serves as cofactor. In terms of processing, some glutamate residues at the C-terminus are polyglycylated, resulting in polyglycine chains on the gamma-carboxyl group. Glycylation is mainly limited to tubulin incorporated into axonemes (cilia and flagella) whereas glutamylation is prevalent in neuronal cells, centrioles, axonemes, and the mitotic spindle. Both modifications can coexist on the same protein on adjacent residues, and lowering polyglycylation levels increases polyglutamylation, and reciprocally. The precise function of polyglycylation is still unclear. Post-translationally, some glutamate residues at the C-terminus are polyglutamylated, resulting in polyglutamate chains on the gamma-carboxyl group. Polyglutamylation plays a key role in microtubule severing by spastin (SPAST). SPAST preferentially recognizes and acts on microtubules decorated with short polyglutamate tails: severing activity by SPAST increases as the number of glutamates per tubulin rises from one to eight, but decreases beyond this glutamylation threshold. As to expression, highly expressed in testis.

The protein resides in the cytoplasm. It is found in the cytoskeleton. Tubulin is the major constituent of microtubules, a cylinder consisting of laterally associated linear protofilaments composed of alpha- and beta-tubulin heterodimers. Microtubules grow by the addition of GTP-tubulin dimers to the microtubule end, where a stabilizing cap forms. Below the cap, tubulin dimers are in GDP-bound state, owing to GTPase activity of alpha-tubulin. TUBB3 plays a role in dorsal root ganglion axon projection towards the spinal cord. This Gallus gallus (Chicken) protein is Tubulin beta-3 chain.